The primary structure comprises 448 residues: Phosphoglucosamine mutase (448 aa).

S102 serves as the catalytic Phosphoserine intermediate. Mg(2+) contacts are provided by S102, D242, D244, and D246. S102 is subject to Phosphoserine.

The protein belongs to the phosphohexose mutase family. It depends on Mg(2+) as a cofactor. In terms of processing, activated by phosphorylation.

The enzyme catalyses alpha-D-glucosamine 1-phosphate = D-glucosamine 6-phosphate. Catalyzes the conversion of glucosamine-6-phosphate to glucosamine-1-phosphate. The polypeptide is Phosphoglucosamine mutase (Brevibacillus brevis (strain 47 / JCM 6285 / NBRC 100599)).